Consider the following 405-residue polypeptide: L-carnitine CoA-transferase (405 aa).

CoA is bound by residues lysine 97 and arginine 104. Residue aspartate 169 is the Nucleophile of the active site.

This sequence belongs to the CoA-transferase III family. CaiB subfamily. In terms of assembly, homodimer.

It localises to the cytoplasm. The catalysed reaction is crotonobetainyl-CoA + (R)-carnitine = crotonobetaine + (R)-carnitinyl-CoA. It catalyses the reaction 4-(trimethylamino)butanoyl-CoA + (R)-carnitine = (R)-carnitinyl-CoA + 4-(trimethylamino)butanoate. The protein operates within amine and polyamine metabolism; carnitine metabolism. Its function is as follows. Catalyzes the reversible transfer of the CoA moiety from gamma-butyrobetainyl-CoA to L-carnitine to generate L-carnitinyl-CoA and gamma-butyrobetaine. Is also able to catalyze the reversible transfer of the CoA moiety from gamma-butyrobetainyl-CoA or L-carnitinyl-CoA to crotonobetaine to generate crotonobetainyl-CoA. The protein is L-carnitine CoA-transferase of Escherichia coli O17:K52:H18 (strain UMN026 / ExPEC).